The primary structure comprises 261 residues: Carbonic anhydrase 1 (261 aa).

Position 2 is an N-acetylalanine (Ala2). Residues Pro4 to Phe261 form the Alpha-carbonic anhydrase domain. Residue His65 is the Proton donor/acceptor of the active site. Zn(2+) is bound by residues His95, His97, and His120. Substrate is bound by residues Thr200 and Thr200–His201. A disordered region spans residues Asn238 to Phe261.

Belongs to the alpha-carbonic anhydrase family. Requires Zn(2+) as cofactor.

The protein localises to the cytoplasm. The enzyme catalyses hydrogencarbonate + H(+) = CO2 + H2O. It catalyses the reaction urea = cyanamide + H2O. With respect to regulation, inhibited by acetazolamide. Functionally, catalyzes the reversible hydration of carbon dioxide. Can hydrate cyanamide to urea. The polypeptide is Carbonic anhydrase 1 (CA1) (Macaca mulatta (Rhesus macaque)).